We begin with the raw amino-acid sequence, 398 residues long: Succinate--CoA ligase [ADP-forming] subunit beta (398 aa).

One can recognise an ATP-grasp domain in the interval 9–254 (KALLKSYGAP…TTEEDDKEIE (246 aa)). ATP-binding positions include K46, 53 to 55 (GRG), E109, A112, and E117. N209 and D223 together coordinate Mg(2+). Residues N274 and 331-333 (GIM) each bind substrate.

Belongs to the succinate/malate CoA ligase beta subunit family. In terms of assembly, heterotetramer of two alpha and two beta subunits. Mg(2+) is required as a cofactor.

It carries out the reaction succinate + ATP + CoA = succinyl-CoA + ADP + phosphate. The catalysed reaction is GTP + succinate + CoA = succinyl-CoA + GDP + phosphate. Its pathway is carbohydrate metabolism; tricarboxylic acid cycle; succinate from succinyl-CoA (ligase route): step 1/1. Its function is as follows. Succinyl-CoA synthetase functions in the citric acid cycle (TCA), coupling the hydrolysis of succinyl-CoA to the synthesis of either ATP or GTP and thus represents the only step of substrate-level phosphorylation in the TCA. The beta subunit provides nucleotide specificity of the enzyme and binds the substrate succinate, while the binding sites for coenzyme A and phosphate are found in the alpha subunit. The protein is Succinate--CoA ligase [ADP-forming] subunit beta of Rhizobium meliloti (strain 1021) (Ensifer meliloti).